The chain runs to 155 residues: Large ribosomal subunit protein uL22 (155 aa).

This sequence belongs to the universal ribosomal protein uL22 family. In terms of assembly, part of the 50S ribosomal subunit.

In terms of biological role, this protein binds specifically to 23S rRNA. It makes multiple contacts with different domains of the 23S rRNA in the assembled 50S subunit and ribosome. Its function is as follows. The globular domain of the protein is located near the polypeptide exit tunnel on the outside of the subunit, while an extended beta-hairpin is found that lines the wall of the exit tunnel in the center of the 70S ribosome. The chain is Large ribosomal subunit protein uL22 from Archaeoglobus fulgidus (strain ATCC 49558 / DSM 4304 / JCM 9628 / NBRC 100126 / VC-16).